Consider the following 193-residue polypeptide: Xanthine phosphoribosyltransferase (193 aa).

Xanthine is bound by residues Leu20 and Asn27. 128-132 provides a ligand contact to 5-phospho-alpha-D-ribose 1-diphosphate; it reads ASGGT. Lys156 is a binding site for xanthine.

Belongs to the purine/pyrimidine phosphoribosyltransferase family. Xpt subfamily. In terms of assembly, homodimer.

Its subcellular location is the cytoplasm. It catalyses the reaction XMP + diphosphate = xanthine + 5-phospho-alpha-D-ribose 1-diphosphate. The protein operates within purine metabolism; XMP biosynthesis via salvage pathway; XMP from xanthine: step 1/1. In terms of biological role, converts the preformed base xanthine, a product of nucleic acid breakdown, to xanthosine 5'-monophosphate (XMP), so it can be reused for RNA or DNA synthesis. The protein is Xanthine phosphoribosyltransferase of Deinococcus deserti (strain DSM 17065 / CIP 109153 / LMG 22923 / VCD115).